The primary structure comprises 130 residues: ATP synthase epsilon chain (130 aa).

This sequence belongs to the ATPase epsilon chain family. In terms of assembly, F-type ATPases have 2 components, CF(1) - the catalytic core - and CF(0) - the membrane proton channel. CF(1) has five subunits: alpha(3), beta(3), gamma(1), delta(1), epsilon(1). CF(0) has three main subunits: a, b and c.

It is found in the cell inner membrane. Functionally, produces ATP from ADP in the presence of a proton gradient across the membrane. The protein is ATP synthase epsilon chain of Campylobacter hominis (strain ATCC BAA-381 / DSM 21671 / CCUG 45161 / LMG 19568 / NCTC 13146 / CH001A).